Consider the following 401-residue polypeptide: S-adenosylmethionine synthase (401 aa).

Histidine 15 is an ATP binding site. Aspartate 17 serves as a coordination point for Mg(2+). Position 48 (glutamate 48) interacts with K(+). L-methionine contacts are provided by glutamate 61 and glutamine 104. A flexible loop region spans residues 104–114 (QSPDIALGVDR). Residues 179–181 (DGK), 246–247 (RF), aspartate 255, 261–262 (RK), alanine 278, and lysine 282 each bind ATP. Aspartate 255 serves as a coordination point for L-methionine. Lysine 286 is an L-methionine binding site.

Belongs to the AdoMet synthase family. Homotetramer; dimer of dimers. Mg(2+) is required as a cofactor. K(+) serves as cofactor.

The protein resides in the cytoplasm. The catalysed reaction is L-methionine + ATP + H2O = S-adenosyl-L-methionine + phosphate + diphosphate. It functions in the pathway amino-acid biosynthesis; S-adenosyl-L-methionine biosynthesis; S-adenosyl-L-methionine from L-methionine: step 1/1. Its function is as follows. Catalyzes the formation of S-adenosylmethionine (AdoMet) from methionine and ATP. The overall synthetic reaction is composed of two sequential steps, AdoMet formation and the subsequent tripolyphosphate hydrolysis which occurs prior to release of AdoMet from the enzyme. This Petrotoga mobilis (strain DSM 10674 / SJ95) protein is S-adenosylmethionine synthase.